A 126-amino-acid polypeptide reads, in one-letter code: Small ribosomal subunit protein uS12 (126 aa).

Residue aspartate 89 is modified to 3-methylthioaspartic acid.

Belongs to the universal ribosomal protein uS12 family. As to quaternary structure, part of the 30S ribosomal subunit. Contacts proteins S8 and S17. May interact with IF1 in the 30S initiation complex.

Its function is as follows. With S4 and S5 plays an important role in translational accuracy. In terms of biological role, interacts with and stabilizes bases of the 16S rRNA that are involved in tRNA selection in the A site and with the mRNA backbone. Located at the interface of the 30S and 50S subunits, it traverses the body of the 30S subunit contacting proteins on the other side and probably holding the rRNA structure together. The combined cluster of proteins S8, S12 and S17 appears to hold together the shoulder and platform of the 30S subunit. The protein is Small ribosomal subunit protein uS12 of Polynucleobacter asymbioticus (strain DSM 18221 / CIP 109841 / QLW-P1DMWA-1) (Polynucleobacter necessarius subsp. asymbioticus).